The chain runs to 655 residues: Serine/threonine-protein kinase SKM1 (655 aa).

In terms of domain architecture, PH spans 3–118 (GVKKEGWISY…WLDAIFAKCP (116 aa)). One can recognise a CRIB domain in the interval 123–136 (VSSPTNFTHKVHVG). Composition is skewed to basic and acidic residues over residues 265–276 (EEGRVHVSKEST) and 318–327 (KNHDSKTKWH). Positions 265–327 (EEGRVHVSKE…KNHDSKTKWH (63 aa)) are disordered. One can recognise a Protein kinase domain in the interval 360–639 (FQLVEKAGQG…VRKLLTFEFL (280 aa)). ATP-binding positions include 366–374 (AGQGASGAV) and lysine 406. The Proton acceptor role is filled by aspartate 507.

The protein belongs to the protein kinase superfamily. STE Ser/Thr protein kinase family. STE20 subfamily.

It catalyses the reaction L-seryl-[protein] + ATP = O-phospho-L-seryl-[protein] + ADP + H(+). It carries out the reaction L-threonyl-[protein] + ATP = O-phospho-L-threonyl-[protein] + ADP + H(+). In terms of biological role, may be involved in cellular signaling or cytoskeletal functions. May play a role in morphogenetic control. In Saccharomyces cerevisiae (strain ATCC 204508 / S288c) (Baker's yeast), this protein is Serine/threonine-protein kinase SKM1 (SKM1).